The chain runs to 294 residues: NAD kinase (294 aa).

The active-site Proton acceptor is the Asp74. NAD(+) contacts are provided by residues 74-75 (DG), 148-149 (NE), His159, Arg176, Asp178, 189-194 (TAYSLS), and Gln249.

This sequence belongs to the NAD kinase family. A divalent metal cation serves as cofactor.

It is found in the cytoplasm. It carries out the reaction NAD(+) + ATP = ADP + NADP(+) + H(+). In terms of biological role, involved in the regulation of the intracellular balance of NAD and NADP, and is a key enzyme in the biosynthesis of NADP. Catalyzes specifically the phosphorylation on 2'-hydroxyl of the adenosine moiety of NAD to yield NADP. This chain is NAD kinase, found in Vibrio atlanticus (strain LGP32) (Vibrio splendidus (strain Mel32)).